The sequence spans 389 residues: MVTVEEVRKAQRAQGPATIMAIGTSTPQNCVDQSTYPDYYFRITNSEHLVELKEKFKRMCEKSMIKKRYMYLTEEILTENPNICAYMAPSLDARQDIVVVEVPKLGKEAAQKAIKEWGQPKSKITHLVFCTTSGVDMPGADYQLTKLLGLQPSVKRFMMYQQGCFAGGTVIRLAKDLAENNKGARVLVVCSEITAVTFRGPSDAHLDSLVGQALFGDGAAALIIGSDPDPDLERPLFQLVSAAQTILPDSGGAIDGHLREVGLTFHLLKDVPGLISKHIEKSLNEAFQPLGIRDWNSLFWIAHPGGPAILDQVEEKLELKPEKLRATRHVLSEYGNMSSACVLFILDEMRKASSKEGLNTTGEGLEWGVLFGFGPGLTVETVVLHSVSA.

The active site involves Cys-164.

This sequence belongs to the thiolase-like superfamily. Chalcone/stilbene synthases family.

It carries out the reaction (E)-4-coumaroyl-CoA + 3 malonyl-CoA + 3 H(+) = 2',4,4',6'-tetrahydroxychalcone + 3 CO2 + 4 CoA. The protein operates within secondary metabolite biosynthesis; flavonoid biosynthesis. In terms of biological role, the primary product of this enzyme is 4,2',4',6'-tetrahydroxychalcone (also termed naringenin-chalcone or chalcone) which can under specific conditions spontaneously isomerize into naringenin. In Ipomoea purpurea (Common morning glory), this protein is Chalcone synthase E (CHSE).